The following is a 416-amino-acid chain: Adipocyte plasma membrane-associated protein (416 aa).

Residues 1–32 (MSEADGLRQRRPLRPQVVTDDDGQAPEAKDGS) are disordered. N-acetylserine is present on S2. Over 2–40 (SEADGLRQRRPLRPQVVTDDDGQAPEAKDGSSFSGRVFR) the chain is Cytoplasmic. T19 is modified (phosphothreonine). The chain crosses the membrane as a helical; Signal-anchor for type II membrane protein span at residues 41 to 61 (VTFLMLAVSLTVPLLGAMMLL). Topologically, residues 62-416 (ESPIDPQPLS…FLCRLSLQAV (355 aa)) are extracellular. 2 N-linked (GlcNAc...) asparagine glycosylation sites follow: N160 and N196.

The protein belongs to the strictosidine synthase family. In terms of tissue distribution, liver, glomerular and tubular structures of the kidney, endothelial cells, arterial wall and pancreatic islets of Langerhans (at protein level). Found ubiquitously in adult as well as in embryonic tissues. In adult tissue, the highest expression is found in the liver, placenta and heart. Found on the cell surface of monocytes. In embryonic tissue, the highest expression levels is found in the liver and the kidney.

The protein localises to the membrane. Exhibits strong arylesterase activity with beta-naphthyl acetate and phenyl acetate. May play a role in adipocyte differentiation. This Homo sapiens (Human) protein is Adipocyte plasma membrane-associated protein (APMAP).